The following is a 95-amino-acid chain: Osteocalcin (95 aa).

The signal sequence occupies residues 1–23; that stretch reads MRTIFLLTLLTLAALCLSDLTDA. A propeptide spanning residues 24 to 49 is cleaved from the precursor; it reads KPSGPESDKAFMSKQEGNKVVNRLRR. Positions 46-92 constitute a Gla domain; sequence RLRRYLGASVPSPDPLEPTREQCELNPACDELSDQYGLKTAYKRIYG. 4 residues coordinate Ca(2+): glutamate 62, glutamate 66, glutamate 69, and aspartate 75. Residues glutamate 62, glutamate 66, and glutamate 69 each carry the 4-carboxyglutamate modification. The cysteines at positions 68 and 74 are disulfide-linked.

This sequence belongs to the osteocalcin/matrix Gla protein family. Gamma-carboxyglutamate residues are formed by vitamin K dependent carboxylation by GGCX. These residues are essential for the binding of calcium. Carboxylated in a Ptprv/Esp-dependent process. Decarboxylation promotes the hormone activity. In terms of tissue distribution, bone.

It is found in the secreted. The carboxylated form is one of the main organic components of the bone matrix, which constitutes 1-2% of the total bone protein: it acts as a negative regulator of bone formation and is required to limit bone formation without impairing bone resorption or mineralization. The carboxylated form binds strongly to apatite and calcium. Functionally, the uncarboxylated form acts as a hormone secreted by osteoblasts, which regulates different cellular processes, such as energy metabolism, male fertility and brain development. Regulates of energy metabolism by acting as a hormone favoring pancreatic beta-cell proliferation, insulin secretion and sensitivity and energy expenditure. Uncarboxylated osteocalcin hormone also promotes testosterone production in the testes: acts as a ligand for G protein-coupled receptor GPRC6A at the surface of Leydig cells, initiating a signaling response that promotes the expression of enzymes required for testosterone synthesis in a CREB-dependent manner. Also acts as a regulator of brain development: osteocalcin hormone crosses the blood-brain barrier and acts as a ligand for GPR158 on neurons, initiating a signaling response that prevents neuronal apoptosis in the hippocampus, favors the synthesis of all monoamine neurotransmitters and inhibits that of gamma-aminobutyric acid (GABA). Osteocalcin also crosses the placenta during pregnancy and maternal osteocalcin is required for fetal brain development. The protein is Osteocalcin of Mus musculus (Mouse).